Consider the following 198-residue polypeptide: CASP-like protein 2B1 (198 aa).

The Cytoplasmic portion of the chain corresponds to methionine 1–lysine 12. The helical transmembrane segment at valine 13–valine 33 threads the bilayer. The Extracellular segment spans residues glycine 34 to lysine 55. The chain crosses the membrane as a helical span at residues alanine 56–alanine 76. Residues arginine 77 to glycine 91 lie on the Cytoplasmic side of the membrane. Residues alanine 92–alanine 112 traverse the membrane as a helical segment. At alanine 113–glutamate 149 the chain is on the extracellular side. Residues glycine 150–phenylalanine 170 form a helical membrane-spanning segment. The Cytoplasmic portion of the chain corresponds to asparagine 171–tryptophan 198.

This sequence belongs to the Casparian strip membrane proteins (CASP) family. In terms of assembly, homodimer and heterodimers.

The protein resides in the cell membrane. This Oryza sativa subsp. japonica (Rice) protein is CASP-like protein 2B1.